The chain runs to 666 residues: SNARE-interacting protein KEULE (666 aa).

A coiled-coil region spans residues 340–377; that stretch reads KNKAAQLQGKRDGAELSTRDLQKMVQALPQYSEQIDKL. The tract at residues 534 to 589 is disordered; that stretch reads KEDFPCMNDPSPSFHGSTSLSSAASSSQGQAAQSMRSRRTPTWAKPRGSDDGYSSD. Positions 550-568 are enriched in low complexity; the sequence is STSLSSAASSSQGQAAQSM.

This sequence belongs to the STXBP/unc-18/SEC1 family. Binds the syntaxin KNOLLE. Interacts with SEC6. As to expression, expressed throughout the plant, both in mitotically active and quiescent cells. Enriched in dividing tissues.

Its subcellular location is the cytoplasm. The protein localises to the membrane. The protein resides in the cytoskeleton. It is found in the phragmoplast. Functionally, regulator of vesicle trafficking involved in cytokinesis and root hair development, but not required for cell elongation. In Arabidopsis thaliana (Mouse-ear cress), this protein is SNARE-interacting protein KEULE (KEU).